The sequence spans 367 residues: Aldo-keto reductase AMT2 (367 aa).

Position 76 (D76) interacts with NADP(+). Y81 functions as the Proton donor in the catalytic mechanism. H173 lines the substrate pocket. Residues 203–204 (SS), Q229, 258–268 (GPLAAGKLARP), and 330–338 (SSVERMDEV) each bind NADP(+). Residues 346–367 (LSDEEESRLEDPYKAQPPQGHS) are disordered.

The protein belongs to the aldo/keto reductase family.

Its pathway is mycotoxin biosynthesis. In terms of biological role, aldo-keto reductase; part of the gene clusters that mediate the biosynthesis of AM-toxins, host-selective toxins (HSTs) causing Alternaria blotch on apple, a worldwide distributed disease. AM-toxins are cyclic depsipeptides containing the 3 residues 2-hydroxy-isovaleric acid (2-HIV), dehydroalanine, L-alanine which are common for all 3 AM-toxins I to III. The fourth precursor is L-alpha-amino-methoxyphenyl-valeric acid (L-Amv) for AM-toxin I, L-alpha-amino-phenyl-valeric acid (L-Apv) for AM-toxin II, and L-alpha-amino-hydroxyphenyl-valeric acid (L-Ahv) for AM-toxin III. AM-toxins have two target sites for affecting susceptible apple cells; they cause invagination of the plasma membrane and electrolyte loss and chloroplast disorganization. The non-ribosomal peptide synthetase AMT1 contains 4 catalytic modules and is responsible for activation of each residue in AM-toxin. The aldo-keto reductase AMT2 catalyzes the conversion of 2-keto-isovaleric acid (2-KIV) to 2-hydroxy-isovaleric acid (2-HIV), one of the precursor residues incorporated by AMT1 during AM-toxin biosynthesis, by reduction of its ketone to an alcohol. The cytochrome P450 monooxygenase AMT3 and the thioesterase AMT4 are also important for AM-toxin production, but their exact function within the AM-toxin biosynthesis are not known yet. Up to 21 proteins (including AMT1 to AMT4) are predicted to be involved in AM-toxin biosynthesis since their expression ishighly up-regulated in AM-toxin-producing cultures. This Alternaria alternata (Alternaria rot fungus) protein is Aldo-keto reductase AMT2.